The primary structure comprises 145 residues: Small ribosomal subunit protein uS9 (145 aa).

It belongs to the universal ribosomal protein uS9 family.

The protein localises to the cytoplasm. This Fritillaria agrestis (Stinkbells) protein is Small ribosomal subunit protein uS9 (RPS16).